Here is a 1655-residue protein sequence, read N- to C-terminus: Outer membrane protein B (1655 aa).

The propeptide occupies 1335–1362 (GALRYLGTPETAEMAGPEAGAIPAAVAA). The 289-residue stretch at 1367–1655 (VDNVAYGIWA…QGTLKVRVNF (289 aa)) folds into the Autotransporter domain.

It belongs to the rickettsiae OmpA/OmpB family.

The protein resides in the periplasm. It localises to the secreted. It is found in the cell surface. Its subcellular location is the cell outer membrane. Functionally, the 120 kDa surface-exposed protein is a major structural protein which may play a role as a rickettsial virulence factor and/or immunogen during infection. Its function is as follows. The 32 kDa beta peptide may serve as a membrane anchor. It has been shown to adhere to biotinylated Vero cell proteins. The sequence is that of Outer membrane protein B (ompB) from Rickettsia conorii (strain ATCC VR-613 / Malish 7).